An 823-amino-acid polypeptide reads, in one-letter code: Mitochondrial intermediate peptidase 2 (823 aa).

A mitochondrion-targeting transit peptide spans 1-33 (MRRLQQSLRRRSARRCPFILIPHRLLTTSYASY). The segment at 532–553 (IDGDGLPEDWDKPYGPGLEADK) is disordered. Histidine 595 provides a ligand contact to Zn(2+). Glutamate 596 is a catalytic residue. Residues histidine 599 and histidine 602 each contribute to the Zn(2+) site.

It belongs to the peptidase M3 family. Requires Zn(2+) as cofactor.

The protein localises to the mitochondrion matrix. It catalyses the reaction Release of an N-terminal octapeptide as second stage of processing of some proteins imported into the mitochondrion.. Cleaves proteins, imported into the mitochondrion, to their mature size. While most mitochondrial precursor proteins are processed to the mature form in one step by mitochondrial processing peptidase (MPP), the sequential cleavage by MIP of an octapeptide after initial processing by MPP is a required step for a subgroup of nuclear-encoded precursor proteins destined for the matrix or the inner membrane. In Cryptococcus neoformans var. neoformans serotype D (strain B-3501A) (Filobasidiella neoformans), this protein is Mitochondrial intermediate peptidase 2 (OCT2).